The primary structure comprises 446 residues: Iroquois-class homeodomain protein IRX-6 (446 aa).

Positions 146–208 (GAGRRKNATR…NARRRLKKEN (63 aa)) form a DNA-binding region, homeobox. 2 disordered regions span residues 208–273 (NKMT…EDEE) and 362–394 (AVEG…RLSV). The segment covering 217–226 (KGGEERKAEG) has biased composition (basic and acidic residues). Residues 256–273 (LEDLEEEEEEEEEAEDEE) show a composition bias toward acidic residues.

The protein belongs to the TALE/IRO homeobox family.

It is found in the nucleus. Its function is as follows. Transcription factor. Binds to the iroquois binding site (IBS) motif of target genes to regulate gene expression; functions as a transcriptional activator or repressor. Modulates expression of RCVRN, VSX1, BHLHE22/BHLHB5 and TACR3/Nk3r. Required downstream of retinal bipolar cell specification for the terminal differentiation of type 2, type 3a and possibly type 6 bipolar cells. This is Iroquois-class homeodomain protein IRX-6 (IRX6) from Homo sapiens (Human).